Consider the following 346-residue polypeptide: MRFVDEVTFVVRAGDGGDGCVHFRREKYVPRGGPDGGDGGRGGSVYLEGDEGLNTLVDYRHDRFFSAESGEAGGGRQCTGRSGVDRILPVPVGTLVMDEGTGEVIGDVTRDGERLLVAAGGRGGLGNLHFKSSTNRAPRQSTEGTAGESRELRLELQLLADVGLLGMPNVGKSTLIRTISAARPKVADYPFTTLYPQLGVVRYEAQRSFVVADIPGIIEGAAEGAGLGVRFLKHLSRTGLLLHLVDGVAEEERGGDPVADAQTLLAELEAFSPELAQKPRWLVVNRLDALPEEMRAERVAEIARGLGWDGPVYGISGLTGEGVDRLCGDIMNDLEARRREEDGETA.

One can recognise an Obg domain in the interval 1–159 (MRFVDEVTFV…RELRLELQLL (159 aa)). The tract at residues 128-148 (LHFKSSTNRAPRQSTEGTAGE) is disordered. Residues 130–144 (FKSSTNRAPRQSTEG) show a composition bias toward polar residues. The OBG-type G domain maps to 160–335 (ADVGLLGMPN…LCGDIMNDLE (176 aa)). Residues 166-173 (GMPNVGKS), 191-195 (FTTLY), 213-216 (DIPG), 285-288 (NRLD), and 316-318 (SGL) each bind GTP. Mg(2+) contacts are provided by serine 173 and threonine 193.

Belongs to the TRAFAC class OBG-HflX-like GTPase superfamily. OBG GTPase family. In terms of assembly, monomer. It depends on Mg(2+) as a cofactor.

Its subcellular location is the cytoplasm. An essential GTPase which binds GTP, GDP and possibly (p)ppGpp with moderate affinity, with high nucleotide exchange rates and a fairly low GTP hydrolysis rate. Plays a role in control of the cell cycle, stress response, ribosome biogenesis and in those bacteria that undergo differentiation, in morphogenesis control. The chain is GTPase Obg from Halorhodospira halophila (strain DSM 244 / SL1) (Ectothiorhodospira halophila (strain DSM 244 / SL1)).